The following is a 214-amino-acid chain: FSCSQCDESFVQRSELELHRQLHSGDKQFTCSECGKCFKRFSLLKEHHRIHTGENTFTCDECGKCFTQKSHMTAHQKSHLGKKPFCCSECGKHFKQNSQLVVHQRTHTGEKPFTCTESGQWFKLQSYLTEHQKSHTGEKPFSCSDCGKCFKRHSLFIEHQRIHTGEDTFSCSVCEKTFTRRSHLTAHEKCHEENNPFPFLNTLTFPGLAQIFED.

C2H2-type zinc fingers lie at residues 1-23 (FSCSQCDESFVQRSELELHRQLH), 29-51 (FTCSECGKCFKRFSLLKEHHRIH), 57-79 (FTCDECGKCFTQKSHMTAHQKSH), 85-107 (FCCSECGKHFKQNSQLVVHQRTH), 113-135 (FTCTESGQWFKLQSYLTEHQKSH), 141-163 (FSCSDCGKCFKRHSLFIEHQRIH), and 169-191 (FSCSVCEKTFTRRSHLTAHEKCH).

Belongs to the krueppel C2H2-type zinc-finger protein family.

Its subcellular location is the nucleus. Functionally, may be involved in transcriptional regulation. This Xenopus laevis (African clawed frog) protein is Oocyte zinc finger protein XlCOF10.